The primary structure comprises 297 residues: Formylmethanofuran--tetrahydromethanopterin formyltransferase-like protein (297 aa).

This sequence belongs to the FTR family.

The polypeptide is Formylmethanofuran--tetrahydromethanopterin formyltransferase-like protein (ehaS) (Methanothermobacter thermautotrophicus (strain ATCC 29096 / DSM 1053 / JCM 10044 / NBRC 100330 / Delta H) (Methanobacterium thermoautotrophicum)).